A 722-amino-acid chain; its full sequence is Protein HAPLESS 2-A (722 aa).

The N-terminal stretch at 1–24 is a signal peptide; sequence MPRRRGTPLPTILLLLAFVGGACG. The Extracellular portion of the chain corresponds to 25 to 552; it reads TEILSKSRLE…LFDFGCHIQY (528 aa). 7 disulfides stabilise this stretch: C36–C48, C129–C159, C141–C188, C160–C315, C162–C171, C298–C322, and C435–C473. The chain crosses the membrane as a helical span at residues 553–573; the sequence is VCIGWILLLLLIPAAVVFLWL. At 574–722 the chain is on the cytoplasmic side; it reads LHQEGLFDPL…HRDGHYSPSV (149 aa). A compositionally biased stretch (basic residues) spans 598-641; that stretch reads RRRHQKGRHHRHHHDHRHRHGHSHGDHHHHYHGGHHQRRRHHHP. 2 disordered regions span residues 598-665 and 680-722; these read RRRH…RNHH and RLDR…SPSV. A compositionally biased stretch (basic and acidic residues) spans 646–662; that stretch reads VEGHHHDRQQHSHEAGR. Over residues 701–711 the composition is skewed to basic residues; sequence RRSRHERHGGH. Positions 712–722 are enriched in basic and acidic residues; sequence GHRDGHYSPSV.

Belongs to the HAP2/GCS1 family.

The protein localises to the endoplasmic reticulum membrane. The protein resides in the cell membrane. Its function is as follows. Required for male fertility. Plays a role in pollen tube guidance and successful gamete attachment. Essential for the fusion of gametes during double fertilization, where one male gamete fuses with the egg to produce a zygote, and another male gamete fuses with the central cell to produce the endosperm. Mediates the fusion of cell membranes. Not required for pollen tube outgrowth. The chain is Protein HAPLESS 2-A (HAP2A) from Oryza sativa subsp. japonica (Rice).